The primary structure comprises 205 residues: Molybdenum cofactor guanylyltransferase (205 aa).

GTP contacts are provided by residues 14 to 16 (LAG), lysine 27, aspartate 77, and aspartate 107. Position 107 (aspartate 107) interacts with Mg(2+).

The protein belongs to the MobA family. As to quaternary structure, monomer. It depends on Mg(2+) as a cofactor.

It localises to the cytoplasm. The enzyme catalyses Mo-molybdopterin + GTP + H(+) = Mo-molybdopterin guanine dinucleotide + diphosphate. Transfers a GMP moiety from GTP to Mo-molybdopterin (Mo-MPT) cofactor (Moco or molybdenum cofactor) to form Mo-molybdopterin guanine dinucleotide (Mo-MGD) cofactor. The sequence is that of Molybdenum cofactor guanylyltransferase from Burkholderia vietnamiensis (strain G4 / LMG 22486) (Burkholderia cepacia (strain R1808)).